A 292-amino-acid chain; its full sequence is 33 kDa chaperonin (292 aa).

2 disulfide bridges follow: Cys238/Cys240 and Cys271/Cys274.

This sequence belongs to the HSP33 family. Under oxidizing conditions two disulfide bonds are formed involving the reactive cysteines. Under reducing conditions zinc is bound to the reactive cysteines and the protein is inactive.

It localises to the cytoplasm. Redox regulated molecular chaperone. Protects both thermally unfolding and oxidatively damaged proteins from irreversible aggregation. Plays an important role in the bacterial defense system toward oxidative stress. The chain is 33 kDa chaperonin from Alkaliphilus metalliredigens (strain QYMF).